Consider the following 109-residue polypeptide: Stress-response A/B barrel domain-containing protein HS1 (109 aa).

The 95-residue stretch at 8 to 102 (VKHVLLASFK…SLDKVLVIDY (95 aa)) folds into the Stress-response A/B barrel domain. Mg(2+) contacts are provided by Val-36, Ile-39, Glu-40, and Met-42.

Homodimer. The cofactor is Mg(2+).

In terms of biological role, heat stable protein involved in defense against fungal pathogens. Possesses antifungal activity against diverse pathogenic fungi. Possesses antimicrobial activity. Possesses ribonuclease activity. This is Stress-response A/B barrel domain-containing protein HS1 from Arabidopsis thaliana (Mouse-ear cress).